A 354-amino-acid polypeptide reads, in one-letter code: Protein RecA (354 aa).

An ATP-binding site is contributed by G67 to T74. The disordered stretch occupies residues M333–Q354.

This sequence belongs to the RecA family.

The protein localises to the cytoplasm. Functionally, can catalyze the hydrolysis of ATP in the presence of single-stranded DNA, the ATP-dependent uptake of single-stranded DNA by duplex DNA, and the ATP-dependent hybridization of homologous single-stranded DNAs. It interacts with LexA causing its activation and leading to its autocatalytic cleavage. This is Protein RecA from Laribacter hongkongensis (strain HLHK9).